We begin with the raw amino-acid sequence, 159 residues long: Transcriptional repressor NrdR (159 aa).

A zinc finger spans residues 3–34; the sequence is CPFCGAEDTSVVDSRISEEGARIRRRRRCVEC. Residues 49-139 enclose the ATP-cone domain; it reads PQVIKQDGNR…VYRSFEDVGD (91 aa).

It belongs to the NrdR family. It depends on Zn(2+) as a cofactor.

Functionally, negatively regulates transcription of bacterial ribonucleotide reductase nrd genes and operons by binding to NrdR-boxes. In Nitrosomonas europaea (strain ATCC 19718 / CIP 103999 / KCTC 2705 / NBRC 14298), this protein is Transcriptional repressor NrdR.